Consider the following 634-residue polypeptide: Extracellular metalloproteinase mep (634 aa).

The signal sequence occupies residues 1 to 18; it reads MRGLLLAGALALPASVFA. The propeptide occupies 19–245; sequence HPAHQSYGLN…IHGVVDYVAE (227 aa). The N-linked (GlcNAc...) asparagine glycan is linked to Asn286. Zn(2+) is bound at residue His429. Glu430 is a catalytic residue. Position 433 (His433) interacts with Zn(2+).

Belongs to the peptidase M36 family. Zn(2+) serves as cofactor.

It localises to the secreted. Secreted metalloproteinase that allows assimilation of proteinaceous substrates and probably acts as a virulence factor. This is Extracellular metalloproteinase mep (mep) from Aspergillus fumigatus (strain CBS 144.89 / FGSC A1163 / CEA10) (Neosartorya fumigata).